Reading from the N-terminus, the 222-residue chain is Hexitol phosphatase B (222 aa).

Residue D13 is the Nucleophile of the active site. Positions 13 and 15 each coordinate a divalent metal cation. Substrate is bound by residues 13-15 (DMD), 115-116 (SA), and K148. D15 functions as the Proton donor in the catalytic mechanism. D173 lines the a divalent metal cation pocket.

It belongs to the HAD-like hydrolase superfamily. CbbY/CbbZ/Gph/YieH family. Mg(2+) is required as a cofactor. Requires Mn(2+) as cofactor. It depends on Co(2+) as a cofactor. The cofactor is Zn(2+).

The enzyme catalyses sugar phosphate + H2O = sugar + phosphate.. It carries out the reaction 2-deoxy-D-glucose 6-phosphate + H2O = 2-deoxy-D-glucose + phosphate. The catalysed reaction is D-mannitol 1-phosphate + H2O = D-mannitol + phosphate. It catalyses the reaction D-sorbitol 6-phosphate + H2O = D-sorbitol + phosphate. Functionally, sugar-phosphate phosphohydrolase that catalyzes the dephosphorylation of D-mannitol 1-phosphate and D-sorbitol 6-phosphate. Also catalyzes the dephosphorylation of 2-deoxyglucose 6-phosphate (2dGlu6P); this is a biologically important activity in vivo since it contributes to the elimination of this toxic compound and plays an important role in the resistance of E.coli to 2-deoxyglucose. To a lesser extent, is also able to dephosphorylate mannose 6-phosphate (Man6P), erythrose-4-phosphate, 2-deoxyribose-5-phosphate (2dRib5P), ribose-5-phosphate (Rib5P) and glucose-6-phosphate (Glu6P) in vitro. The sequence is that of Hexitol phosphatase B from Escherichia coli (strain K12).